The primary structure comprises 254 residues: Geranylgeranylglyceryl phosphate synthase (254 aa).

Residues Asp-28 and Ser-57 each coordinate Mg(2+). Sn-glycerol 1-phosphate-binding positions include 176–182 (YLEAGSG), 207–208 (GG), and 229–230 (GT).

The protein belongs to the GGGP/HepGP synthase family. Group II subfamily. It depends on Mg(2+) as a cofactor.

The protein resides in the cytoplasm. It carries out the reaction sn-glycerol 1-phosphate + (2E,6E,10E)-geranylgeranyl diphosphate = sn-3-O-(geranylgeranyl)glycerol 1-phosphate + diphosphate. The protein operates within membrane lipid metabolism; glycerophospholipid metabolism. Functionally, prenyltransferase that catalyzes the transfer of the geranylgeranyl moiety of geranylgeranyl diphosphate (GGPP) to the C3 hydroxyl of sn-glycerol-1-phosphate (G1P). This reaction is the first ether-bond-formation step in the biosynthesis of archaeal membrane lipids. The sequence is that of Geranylgeranylglyceryl phosphate synthase from Pyrococcus horikoshii (strain ATCC 700860 / DSM 12428 / JCM 9974 / NBRC 100139 / OT-3).